A 67-amino-acid chain; its full sequence is Disintegrin EC3A (67 aa).

The Disintegrin domain occupies 1–65; that stretch reads NSVHPCCDPV…DCPRNRYKGK (65 aa). Intrachain disulfides connect Cys-6–Cys-29, Cys-20–Cys-26, Cys-25–Cys-50, and Cys-38–Cys-57. Residues 42–44 carry the Cell attachment site; atypical (VGD) motif; the sequence is VGD.

Belongs to the venom metalloproteinase (M12B) family. P-II subfamily. P-IIe sub-subfamily. As to quaternary structure, heterodimer with EC3B; disulfide-linked. In terms of tissue distribution, expressed by the venom gland.

The protein resides in the secreted. Functionally, inhibits adhesion of cells expressing alpha-4/beta-1 (ITGA4/ITGB1) and alpha-4/beta-7 (ITGA4/ITGB7) integrins to the natural ligands vascular cell adhesion molecule 1 (VCAM-1) and mucosal addressin cell adhesion molecule 1 (MADCAM-1). It is also a weaker inhibitor of alpha-5/beta-1 (ITGA5/ITGB1) and alpha-2b/beta-3 (ITGA2B/ITGB3) integrins. The inhibitory activity of EC3 towards alpha-4 integrins is associated with the MLD sequence of EC3B subunit. The ability of EC3 to inhibit ITGA5/ITGB1 resides in both subunits A and B. The sequence is that of Disintegrin EC3A from Echis carinatus (Saw-scaled viper).